Reading from the N-terminus, the 125-residue chain is Small ribosomal subunit protein uS11m (125 aa).

It belongs to the universal ribosomal protein uS11 family.

It localises to the mitochondrion. In Marchantia polymorpha (Common liverwort), this protein is Small ribosomal subunit protein uS11m (RPS11).